Reading from the N-terminus, the 82-residue chain is Large ribosomal subunit protein bL27 (82 aa).

Residues 1–20 (MATKKAGGSSSNGRDSIGKR) are disordered.

Belongs to the bacterial ribosomal protein bL27 family.

The chain is Large ribosomal subunit protein bL27 from Neorickettsia sennetsu (strain ATCC VR-367 / Miyayama) (Ehrlichia sennetsu).